Reading from the N-terminus, the 632-residue chain is Phosphoglucomutase, chloroplastic (632 aa).

The N-terminal 72 residues, 1–72, are a transit peptide targeting the chloroplast; the sequence is MAMESALTST…PSSPSTSVAQ (72 aa). Arg-97 and Ser-190 together coordinate alpha-D-glucose 1,6-bisphosphate. Ser-190 acts as the Phosphoserine intermediate in catalysis. Mg(2+) is bound by residues Ser-190, Asp-355, Asp-357, and Asp-359. Phosphoserine is present on Ser-190. 6 residues coordinate alpha-D-glucose 1,6-bisphosphate: Asp-359, Arg-360, Thr-423, Glu-442, Ser-444, and Lys-455.

It belongs to the phosphohexose mutase family. In terms of assembly, monomer. Requires Mg(2+) as cofactor.

Its subcellular location is the plastid. The protein resides in the chloroplast. It catalyses the reaction alpha-D-glucose 1-phosphate = alpha-D-glucose 6-phosphate. The enzyme catalyses O-phospho-L-seryl-[protein] + alpha-D-glucose 1-phosphate = alpha-D-glucose 1,6-bisphosphate + L-seryl-[protein]. The catalysed reaction is alpha-D-glucose 1,6-bisphosphate + L-seryl-[protein] = O-phospho-L-seryl-[protein] + alpha-D-glucose 6-phosphate. With respect to regulation, inhibited by the Calvin cycle intermediates fructose-1,6-bisphosphate and ribulose-1,5-bisphosphate. In terms of biological role, catalyzes the reversible isomerization of alpha-D-glucose 1-phosphate to alpha-D-glucose 6-phosphate. The mechanism proceeds via the intermediate compound alpha-D-glucose 1,6-bisphosphate. This enzyme participates in both the breakdown and synthesis of glucose. Promotes gravitropic responses, negative in shoots but positive in roots, by facilitating starch granules (statoliths) formation. The sequence is that of Phosphoglucomutase, chloroplastic (PGMP) from Solanum tuberosum (Potato).